The chain runs to 245 residues: Probable phosphatase YE2421 (245 aa).

Zn(2+) contacts are provided by H7, H9, H15, H40, E73, H101, H131, D192, and H194.

Belongs to the PHP family. Homotrimer. It depends on Zn(2+) as a cofactor.

The chain is Probable phosphatase YE2421 from Yersinia enterocolitica serotype O:8 / biotype 1B (strain NCTC 13174 / 8081).